Consider the following 166-residue polypeptide: Small ribosomal subunit protein uS5 (166 aa).

The 64-residue stretch at 11–74 (LIEKLVSVKR…ENAKKNMVSV (64 aa)) folds into the S5 DRBM domain.

This sequence belongs to the universal ribosomal protein uS5 family. In terms of assembly, part of the 30S ribosomal subunit. Contacts proteins S4 and S8.

Functionally, with S4 and S12 plays an important role in translational accuracy. Located at the back of the 30S subunit body where it stabilizes the conformation of the head with respect to the body. In Francisella tularensis subsp. tularensis (strain FSC 198), this protein is Small ribosomal subunit protein uS5.